A 619-amino-acid chain; its full sequence is Sorting nexin-41 (619 aa).

Residues 1–95 (MWNDEDNNPY…ELVPRRKPGG (95 aa)) are disordered. The region spanning 108 to 224 (PELPILITEA…WRFLDPNSSW (117 aa)) is the PX domain. R142, S144, K168, and R191 together coordinate a 1,2-diacyl-sn-glycero-3-phospho-(1D-myo-inositol-3-phosphate). Positions 444 to 510 (YLSSSQQIQP…GSPSHKKAAS (67 aa)) are disordered. Basic and acidic residues predominate over residues 454–467 (PRREPPAQHRRDGS).

This sequence belongs to the sorting nexin family.

Its subcellular location is the endosome membrane. The protein localises to the endomembrane system. In terms of biological role, may be required for cytoplasm to vacuole transport (Cvt) and pexophagy. The polypeptide is Sorting nexin-41 (vsp-6) (Neurospora crassa (strain ATCC 24698 / 74-OR23-1A / CBS 708.71 / DSM 1257 / FGSC 987)).